The chain runs to 530 residues: Protein MGF 505-1R (530 aa).

It belongs to the asfivirus MGF 505 family.

Plays a role in virus cell tropism, and may be required for efficient virus replication in macrophages. The polypeptide is Protein MGF 505-1R (African swine fever virus (isolate Tick/Malawi/Lil 20-1/1983) (ASFV)).